Consider the following 226-residue polypeptide: MTEPTGDQTPEIIGVRRGMFGAKGSGDTSGYGRLVRPVALPGGSPRPYGGYFDEVVDRLAEAVGDDAFTESIERVVIHRDELTLEVHRDRLVEVAQALRDDPALRFELCLGVSGVHYPDDTGRELHAAYPLMSITHNRRIRLEVAVPDDDPHIPSLFGVYPTVDWHERETYDFFGIIFDGHPSLTRIEMPDDWVGHPQRKDYPLGGIPVEYHGAEIPPPDQRRAYN.

Residues 1 to 21 (MTEPTGDQTPEIIGVRRGMFG) are disordered.

It belongs to the complex I 30 kDa subunit family. As to quaternary structure, NDH-1 is composed of 14 different subunits. Subunits NuoB, C, D, E, F, and G constitute the peripheral sector of the complex.

Its subcellular location is the cell membrane. The enzyme catalyses a quinone + NADH + 5 H(+)(in) = a quinol + NAD(+) + 4 H(+)(out). Its function is as follows. NDH-1 shuttles electrons from NADH, via FMN and iron-sulfur (Fe-S) centers, to quinones in the respiratory chain. The immediate electron acceptor for the enzyme in this species is believed to be a menaquinone. Couples the redox reaction to proton translocation (for every two electrons transferred, four hydrogen ions are translocated across the cytoplasmic membrane), and thus conserves the redox energy in a proton gradient. The sequence is that of NADH-quinone oxidoreductase subunit C from Mycolicibacterium gilvum (strain PYR-GCK) (Mycobacterium gilvum (strain PYR-GCK)).